Here is a 262-residue protein sequence, read N- to C-terminus: ATP synthase subunit a (262 aa).

Helical transmembrane passes span 26-46 (VHID…FVFS), 86-106 (VAPL…IDLI), 130-150 (DISA…FYTI), 204-226 (LIFI…GIPL), and 240-260 (LQAF…YNKA).

It belongs to the ATPase A chain family. In terms of assembly, F-type ATPases have 2 components, CF(1) - the catalytic core - and CF(0) - the membrane proton channel. CF(1) has five subunits: alpha(3), beta(3), gamma(1), delta(1), epsilon(1). CF(0) has three main subunits: a(1), b(2) and c(9-12). The alpha and beta chains form an alternating ring which encloses part of the gamma chain. CF(1) is attached to CF(0) by a central stalk formed by the gamma and epsilon chains, while a peripheral stalk is formed by the delta and b chains.

The protein localises to the cell inner membrane. Its function is as follows. Key component of the proton channel; it plays a direct role in the translocation of protons across the membrane. This chain is ATP synthase subunit a, found in Haemophilus influenzae (strain 86-028NP).